Here is a 245-residue protein sequence, read N- to C-terminus: Adenylate kinase (245 aa).

15–20 (GSGKGT) contributes to the ATP binding site. The tract at residues 35-64 (SSGDLLRDAVSKDTPLSQEIKSYLDQGKLL) is NMP. Residues S36, R41, 62–64 (KLL), 103–106 (GFPR), and Q110 contribute to the AMP site. Residues 143–176 (SRYICPACQGIYNEQQGFSSCPKCSVELIRRSDD) form an LID region. R144 contacts ATP. Zn(2+)-binding residues include C147 and C150. 153–154 (IY) serves as a coordination point for ATP. Residues C163 and C166 each coordinate Zn(2+). R173 and R184 together coordinate AMP. A212 provides a ligand contact to ATP.

The protein belongs to the adenylate kinase family. As to quaternary structure, monomer.

Its subcellular location is the cytoplasm. The catalysed reaction is AMP + ATP = 2 ADP. It participates in purine metabolism; AMP biosynthesis via salvage pathway; AMP from ADP: step 1/1. Functionally, catalyzes the reversible transfer of the terminal phosphate group between ATP and AMP. Plays an important role in cellular energy homeostasis and in adenine nucleotide metabolism. In Chlamydia trachomatis serovar A (strain ATCC VR-571B / DSM 19440 / HAR-13), this protein is Adenylate kinase.